The following is a 295-amino-acid chain: Ethanolamine ammonia-lyase small subunit (295 aa).

Residues Val-207, Glu-228, and Cys-258 each contribute to the adenosylcob(III)alamin site.

Belongs to the EutC family. The basic unit is a heterodimer which dimerizes to form tetramers. The heterotetramers trimerize; 6 large subunits form a core ring with 6 small subunits projecting outwards. Requires adenosylcob(III)alamin as cofactor.

Its subcellular location is the bacterial microcompartment. It catalyses the reaction ethanolamine = acetaldehyde + NH4(+). It participates in amine and polyamine degradation; ethanolamine degradation. Functionally, catalyzes the deamination of various vicinal amino-alcohols to oxo compounds. Allows this organism to utilize ethanolamine as the sole source of nitrogen and carbon in the presence of external vitamin B12. This is Ethanolamine ammonia-lyase small subunit from Escherichia coli (strain SMS-3-5 / SECEC).